Reading from the N-terminus, the 580-residue chain is Putative Xaa-Pro dipeptidyl-peptidase (580 aa).

Catalysis depends on charge relay system residues serine 207, aspartate 319, and histidine 350.

This sequence belongs to the peptidase S15 family.

It catalyses the reaction Hydrolyzes Xaa-Pro-|- bonds to release unblocked, N-terminal dipeptides from substrates including Ala-Pro-|-p-nitroanilide and (sequentially) Tyr-Pro-|-Phe-Pro-|-Gly-Pro-|-Ile.. The sequence is that of Putative Xaa-Pro dipeptidyl-peptidase from Bacillus cereus (strain ATCC 14579 / DSM 31 / CCUG 7414 / JCM 2152 / NBRC 15305 / NCIMB 9373 / NCTC 2599 / NRRL B-3711).